We begin with the raw amino-acid sequence, 86 residues long: Secreted transmembrane peptide 6 (86 aa).

Residues 1 to 31 form the signal peptide; that stretch reads MGMKSPNIAAFMLPLLLILFTLSSQLKVVES. The SCOOP motif motif lies at 45–58; sequence IVYTPPSRSCGTSP. The SxS motif essential for MIK2 binding motif lies at 51 to 53; that stretch reads SRS.

The protein belongs to the serine rich endogenous peptide (SCOOP) phytocytokine family. As to quaternary structure, interacts with MIK2 (via extracellular leucine-rich repeat domain); this interaction triggers the formation of complex between MIK2 and the BAK1/SERK3 and SERK4 coreceptors, and subsequent BAK1 activation by phosphorylation. Mostly expressed in leaves, and, to a lower extent, in roots, stems, siliques, seeds and flowers.

The protein resides in the cell membrane. The protein localises to the secreted. Its subcellular location is the extracellular space. It localises to the apoplast. Functionally, brassicaceae-specific phytocytokine (plant endogenous peptide released into the apoplast) perceived by MIK2 in a BAK1/SERK3 and SERK4 coreceptors-dependent manner, that modulates various physiological and antimicrobial processes including growth prevention and reactive oxygen species (ROS) response regulation. Prevents general growth and development. This is Secreted transmembrane peptide 6 from Arabidopsis thaliana (Mouse-ear cress).